We begin with the raw amino-acid sequence, 309 residues long: HPr kinase/phosphorylase (309 aa).

Active-site residues include histidine 139 and lysine 160. 154 to 161 contacts ATP; the sequence is GESGIGKS. Serine 161 contacts Mg(2+). The active-site Proton acceptor; for phosphorylation activity. Proton donor; for dephosphorylation activity is aspartate 178. Residues 202–211 form an important for the catalytic mechanism of both phosphorylation and dephosphorylation region; it reads IELRGIGIID. Position 203 (glutamate 203) interacts with Mg(2+). Arginine 244 is a catalytic residue. The important for the catalytic mechanism of dephosphorylation stretch occupies residues 265–270; it reads PIRPGR.

The protein belongs to the HPrK/P family. In terms of assembly, homohexamer. The cofactor is Mg(2+).

The catalysed reaction is [HPr protein]-L-serine + ATP = [HPr protein]-O-phospho-L-serine + ADP + H(+). It catalyses the reaction [HPr protein]-O-phospho-L-serine + phosphate + H(+) = [HPr protein]-L-serine + diphosphate. Catalyzes the ATP- as well as the pyrophosphate-dependent phosphorylation of a specific serine residue in HPr, a phosphocarrier protein of the phosphoenolpyruvate-dependent sugar phosphotransferase system (PTS). HprK/P also catalyzes the pyrophosphate-producing, inorganic phosphate-dependent dephosphorylation (phosphorolysis) of seryl-phosphorylated HPr (P-Ser-HPr). The two antagonistic activities of HprK/P are regulated by several intracellular metabolites, which change their concentration in response to the absence or presence of rapidly metabolisable carbon sources (glucose, fructose, etc.) in the growth medium. Therefore, by controlling the phosphorylation state of HPr, HPrK/P is a sensor enzyme that plays a major role in the regulation of carbon metabolism and sugar transport: it mediates carbon catabolite repression (CCR), and regulates PTS-catalyzed carbohydrate uptake and inducer exclusion. The chain is HPr kinase/phosphorylase from Lachnoclostridium phytofermentans (strain ATCC 700394 / DSM 18823 / ISDg) (Clostridium phytofermentans).